We begin with the raw amino-acid sequence, 160 residues long: Large ribosomal subunit protein uL11 (160 aa).

The protein belongs to the universal ribosomal protein uL11 family. Part of the ribosomal stalk of the 50S ribosomal subunit. Interacts with L10 and the large rRNA to form the base of the stalk. L10 forms an elongated spine to which L12 dimers bind in a sequential fashion forming a multimeric L10(L12)X complex.

In terms of biological role, forms part of the ribosomal stalk which helps the ribosome interact with GTP-bound translation factors. The sequence is that of Large ribosomal subunit protein uL11 from Methanococcus aeolicus (strain ATCC BAA-1280 / DSM 17508 / OCM 812 / Nankai-3).